The following is a 339-amino-acid chain: MTKIAVLGNGSWGSVLGSMLADNGNDVTLYGNIESVNEEINKTHTNSHYMKDWKLNENAKATGDLEEALNGAELVLFVLPTKAVRIVAKNVRKVLDKTGAKPLLVTATKGIEPGTKKLISEILTEEVYPNDEDKIVAISGPSHAENVAQKDLTAIACASTDEENAKKVQKIFSNDYVRFYTNDDLVGVEVGGAVKNVIAIAAGILVGQGYGDDAKAALMTRGLAEITRLGVNYFGAKPMTFSGLSGIGDLIVTCTSVNSRNWRAGKQIGEGKSLDYVLKNMGQVVEGATTVKAVHELSEEKNIDMPICDAIYRVLYENTDVAEEIKQMMGRDPKPEIRL.

Residues Ser11, Trp12, and Lys109 each contribute to the NADPH site. Sn-glycerol 3-phosphate is bound by residues Lys109, Gly140, and Ser142. Residue Ala144 participates in NADPH binding. Sn-glycerol 3-phosphate-binding residues include Lys195, Asp249, Ser259, Arg260, and Asn261. Lys195 functions as the Proton acceptor in the catalytic mechanism. Position 260 (Arg260) interacts with NADPH. NADPH contacts are provided by Val284 and Glu286.

Belongs to the NAD-dependent glycerol-3-phosphate dehydrogenase family.

The protein localises to the cytoplasm. It carries out the reaction sn-glycerol 3-phosphate + NAD(+) = dihydroxyacetone phosphate + NADH + H(+). The catalysed reaction is sn-glycerol 3-phosphate + NADP(+) = dihydroxyacetone phosphate + NADPH + H(+). It participates in membrane lipid metabolism; glycerophospholipid metabolism. Catalyzes the reduction of the glycolytic intermediate dihydroxyacetone phosphate (DHAP) to sn-glycerol 3-phosphate (G3P), the key precursor for phospholipid synthesis. The sequence is that of Glycerol-3-phosphate dehydrogenase [NAD(P)+] from Lactobacillus helveticus (strain DPC 4571).